The following is a 217-amino-acid chain: Lipid A acyltransferase PagP (217 aa).

The N-terminal stretch at 1–24 (MYLKRILITLSLITLPIVPCLSYA) is a signal peptide. Active-site residues include H89, D132, and S133.

The protein belongs to the lipid A palmitoyltransferase family. As to quaternary structure, homodimer.

It is found in the cell outer membrane. The enzyme catalyses a lipid A + a 1,2-diacyl-sn-glycero-3-phosphocholine = a hepta-acyl lipid A + a 2-acyl-sn-glycero-3-phosphocholine. It carries out the reaction a lipid IVA + a 1,2-diacyl-sn-glycero-3-phosphocholine = a lipid IVB + a 2-acyl-sn-glycero-3-phosphocholine. It catalyses the reaction a lipid IIA + a 1,2-diacyl-sn-glycero-3-phosphocholine = a lipid IIB + a 2-acyl-sn-glycero-3-phosphocholine. Its function is as follows. Transfers a fatty acid residue from the sn-1 position of a phospholipid to the N-linked hydroxyfatty acid chain on the proximal unit of lipid A or its precursors. The polypeptide is Lipid A acyltransferase PagP (Pectobacterium atrosepticum (strain SCRI 1043 / ATCC BAA-672) (Erwinia carotovora subsp. atroseptica)).